The chain runs to 605 residues: Methyl-CpG-binding domain protein 1 (605 aa).

The MBD domain occupies 1–69 (MAEDWLDCPA…TLFDFKQGIL (69 aa)). The segment at 80–123 (AVASKKRKKPSRPAKTRKRQVGPQSGEVRKEAPRDETKADTDTA) is disordered. The span at 83–99 (SKKRKKPSRPAKTRKRQ) shows a compositional bias: basic residues. Positions 84–88 (KKRKK) match the Nuclear localization signal motif. Over residues 106–120 (EVRKEAPRDETKADT) the composition is skewed to basic and acidic residues. A Glycyl lysine isopeptide (Lys-Gly) (interchain with G-Cter in SUMO2) cross-link involves residue lysine 117. CXXC-type zinc fingers lie at residues 169-216 (RMFK…RRCL) and 217-263 (RIVE…RRCL). Residues cysteine 176, cysteine 179, cysteine 182, cysteine 188, cysteine 191, cysteine 194, cysteine 210, cysteine 215, cysteine 225, cysteine 228, cysteine 231, cysteine 237, cysteine 240, cysteine 243, cysteine 257, and cysteine 262 each contribute to the Zn(2+) site. Residues 269–308 (RRKGGCDSKMAARRRPGAQPLPPPPPSQSPEPTEPHPRAL) are disordered. A Glycyl lysine isopeptide (Lys-Gly) (interchain with G-Cter in SUMO2) cross-link involves residue lysine 277. A compositionally biased stretch (pro residues) spans 287–297 (QPLPPPPPSQS). Serine 297 carries the post-translational modification Phosphoserine. Residues 330 to 378 (TNRRQNRKCGACAACLRRMDCGRCDFCCDKPKFGGSNQKRQKCRWRQCL) form a CXXC-type 3 zinc finger. Residues cysteine 338, cysteine 341, cysteine 344, cysteine 350, cysteine 353, cysteine 356, cysteine 372, and cysteine 377 each coordinate Zn(2+). Phosphoserine occurs at positions 391 and 399. The disordered stretch occupies residues 391 to 451 (SESEDGAGSP…EAGGGFVLPP (61 aa)). A compositionally biased stretch (basic residues) spans 403 to 417 (YRRRKRPSSARRHHL). Lysine 422 is covalently cross-linked (Glycyl lysine isopeptide (Lys-Gly) (interchain with G-Cter in SUMO2)). The segment covering 426 to 439 (ATRTAQPDHTQAPT) has biased composition (polar residues). A Glycyl lysine isopeptide (Lys-Gly) (interchain with G-Cter in SUMO2) cross-link involves residue lysine 440. Residues lysine 499 and lysine 538 each participate in a glycyl lysine isopeptide (Lys-Gly) (interchain with G-Cter in SUMO2); alternate cross-link. Residues 520 to 573 (VLVPGCPSKAVDPGLPSVKQEPPDPEEDKEENKDDSASKLAPEEEAGGAGTPVI) are disordered. Residues 529–592 (AVDPGLPSVK…RFRDTAVWLP (64 aa)) form a transcriptional repression domain (TRD) region. Lysine 558 participates in a covalent cross-link: Glycyl lysine isopeptide (Lys-Gly) (interchain with G-Cter in SUMO2).

In terms of assembly, interacts with OASL, ATF7IP, ATF7IP2 and BAHD1. Binds CHAF1A and the SUV39H1-CBX5 complex via the MBD domain. Binds MGP via the TRD domain. May be part of the MeCP1 complex. Post-translationally, sumoylated, sumoylation may increase interaction with ATF7IP. As to expression, widely expressed.

It localises to the nucleus. The protein resides in the nucleus matrix. Its subcellular location is the nucleus speckle. It is found in the chromosome. In terms of biological role, transcriptional repressor that binds CpG islands in promoters where the DNA is methylated at position 5 of cytosine within CpG dinucleotides. Binding is abolished by the presence of 7-mG that is produced by DNA damage by methylmethanesulfonate (MMS). Acts as transcriptional repressor and plays a role in gene silencing by recruiting ATF7IP, which in turn recruits factors such as the histone methyltransferase SETDB1. Probably forms a complex with SETDB1 and ATF7IP that represses transcription and couples DNA methylation and histone 'Lys-9' trimethylation. Isoform 1 and isoform 2 can also repress transcription from unmethylated promoters. The polypeptide is Methyl-CpG-binding domain protein 1 (Homo sapiens (Human)).